The sequence spans 270 residues: MSDQQQLPVYKIALGIEYDGSKYYGWQRQNEVRSVQEKLEKALSQVANEPITVFCAGRTDAGVHGTGQVVHFETTAQRKDAAWTLGVNANLPGDIAVRWVKAVPDDFHARFSATARRYRYIIYNHRLRPAVLSKGVTHFYEPLDAERMHRAAQCLLGENDFTSFRAVQCQSRTPWRNVMHINVTRHGPYVVVDIKANAFVHHMVRNIVGSLMEVGAHNQPERWIAELLAAKDRTLAAATAKAEGLYLVAVDYPDRYDLPKPPMGPLFLAD.

Catalysis depends on Asp-60, which acts as the Nucleophile. The RNA binding stretch occupies residues 107–111 (FHARF). A substrate-binding site is contributed by Tyr-118. Residues 168-172 (QCQSR) form an interaction with tRNA region.

The protein belongs to the tRNA pseudouridine synthase TruA family. Homodimer.

The catalysed reaction is uridine(38/39/40) in tRNA = pseudouridine(38/39/40) in tRNA. Functionally, formation of pseudouridine at positions 38, 39 and 40 in the anticodon stem and loop of transfer RNAs. The sequence is that of tRNA pseudouridine synthase A from Shigella sonnei (strain Ss046).